A 111-amino-acid polypeptide reads, in one-letter code: Ribosome-binding factor A (111 aa).

It belongs to the RbfA family. In terms of assembly, monomer. Binds 30S ribosomal subunits, but not 50S ribosomal subunits or 70S ribosomes.

The protein resides in the cytoplasm. Its function is as follows. One of several proteins that assist in the late maturation steps of the functional core of the 30S ribosomal subunit. Associates with free 30S ribosomal subunits (but not with 30S subunits that are part of 70S ribosomes or polysomes). Required for efficient processing of 16S rRNA. May interact with the 5'-terminal helix region of 16S rRNA. The polypeptide is Ribosome-binding factor A (Helicobacter pylori (strain J99 / ATCC 700824) (Campylobacter pylori J99)).